Consider the following 369-residue polypeptide: Flagellar P-ring protein 1 (369 aa).

An N-terminal signal peptide occupies residues 1–23 (MRKQSLVTLLMVLLSLVWLPASA).

The protein belongs to the FlgI family. The basal body constitutes a major portion of the flagellar organelle and consists of four rings (L,P,S, and M) mounted on a central rod.

The protein resides in the periplasm. It localises to the bacterial flagellum basal body. Functionally, assembles around the rod to form the L-ring and probably protects the motor/basal body from shearing forces during rotation. In Yersinia pseudotuberculosis serotype I (strain IP32953), this protein is Flagellar P-ring protein 1.